The chain runs to 1117 residues: DNA polymerase II large subunit (1117 aa).

Basic and acidic residues predominate over residues 279-294 (STKEEEKKKEESSENK). The tract at residues 279 to 299 (STKEEEKKKEESSENKPKKKA) is disordered.

The protein belongs to the archaeal DNA polymerase II family. As to quaternary structure, heterodimer of a large subunit and a small subunit.

It carries out the reaction DNA(n) + a 2'-deoxyribonucleoside 5'-triphosphate = DNA(n+1) + diphosphate. The enzyme catalyses Exonucleolytic cleavage in the 3'- to 5'-direction to yield nucleoside 5'-phosphates.. Possesses two activities: a DNA synthesis (polymerase) and an exonucleolytic activity that degrades single-stranded DNA in the 3'- to 5'-direction. Has a template-primer preference which is characteristic of a replicative DNA polymerase. This is DNA polymerase II large subunit from Methanosphaera stadtmanae (strain ATCC 43021 / DSM 3091 / JCM 11832 / MCB-3).